A 183-amino-acid chain; its full sequence is Ribulose bisphosphate carboxylase small subunit, chloroplastic 5 (183 aa).

Residues 1-42 (MAAAMMNKSVLLNKQCGKPAAVPKVVMSKGGFARTSAVNKNR) constitute a chloroplast transit peptide.

This sequence belongs to the RuBisCO small chain family. As to quaternary structure, heterohexadecamer of 8 large and 8 small subunits.

It is found in the plastid. The protein resides in the chloroplast. Its function is as follows. RuBisCO catalyzes two reactions: the carboxylation of D-ribulose 1,5-bisphosphate, the primary event in carbon dioxide fixation, as well as the oxidative fragmentation of the pentose substrate. Both reactions occur simultaneously and in competition at the same active site. Although the small subunit is not catalytic it is essential for maximal activity. This is Ribulose bisphosphate carboxylase small subunit, chloroplastic 5 from Acetabularia acetabulum (Mermaid's wine glass).